A 61-amino-acid chain; its full sequence is Translational regulator CsrA (61 aa).

The protein belongs to the CsrA/RsmA family. As to quaternary structure, homodimer; the beta-strands of each monomer intercalate to form a hydrophobic core, while the alpha-helices form wings that extend away from the core.

The protein resides in the cytoplasm. Functionally, a key translational regulator that binds mRNA to regulate translation initiation and/or mRNA stability. Mediates global changes in gene expression, shifting from rapid growth to stress survival by linking envelope stress, the stringent response and the catabolite repression systems. Usually binds in the 5'-UTR; binding at or near the Shine-Dalgarno sequence prevents ribosome-binding, repressing translation, binding elsewhere in the 5'-UTR can activate translation and/or stabilize the mRNA. Its function is antagonized by small RNA(s). In Actinobacillus succinogenes (strain ATCC 55618 / DSM 22257 / CCUG 43843 / 130Z), this protein is Translational regulator CsrA.